The following is a 36-amino-acid chain: Histone H1-like protein EM5 (36 aa).

An H15 domain is found at 1-36 (MITAAVGALKERGGSSRQAILKYIQANFKVQANPAA).

It belongs to the histone H1/H5 family. As to expression, sperm.

It is found in the nucleus. The protein resides in the chromosome. The polypeptide is Histone H1-like protein EM5 (Ensis minor (Razor shell)).